The sequence spans 440 residues: 5-hydroxytryptamine receptor 6 (440 aa).

Topologically, residues 1-27 (MVPEPGPVNSSTPAWGPGPPPAPGGSG) are extracellular. N9 carries N-linked (GlcNAc...) asparagine glycosylation. The chain crosses the membrane as a helical span at residues 28–52 (WVAAALCVVIVLTAAANSLLIALIC). Over 53 to 62 (TQPALRNTSN) the chain is Cytoplasmic. Residues 63–88 (FFLVSLFTSDLMVGLVVMPPAMLNAL) form a helical membrane-spanning segment. Over 89-96 (YGRWVLAR) the chain is Extracellular. The chain crosses the membrane as a helical span at residues 97 to 122 (GLCLLWTAFDVMCCSASILNLCLISL). C99 and C180 are disulfide-bonded. D106 provides a ligand contact to serotonin. Over 123–142 (DRYLLILSPLRYKLRMTAPR) the chain is Cytoplasmic. A helical transmembrane segment spans residues 143–167 (ALALILGAWSLAALASFLPLLLGWH). Residues 168–185 (ELGKARTSAPGQCRLLAS) lie on the Extracellular side of the membrane. Residues 186 to 209 (LPYVLVASGVTFFLPSGAICFTYC) form a helical membrane-spanning segment. Over 210–268 (RILLAARKQAVQVASLTTGTATAGQALETLQVPRTPRPGMESADSRRLTTKHSRKALKA) the chain is Cytoplasmic. Residues 269 to 295 (SLTLGILLSMFFVTWLPFFVASIAQAV) traverse the membrane as a helical segment. Residues 296 to 301 (CDCISP) lie on the Extracellular side of the membrane. A helical membrane pass occupies residues 302–325 (GLFDVLTWLGYCNSTMNPIIYPLF). Topologically, residues 326–440 (MRDFKRALGR…RQHPLGSPMN (115 aa)) are cytoplasmic.

This sequence belongs to the G-protein coupled receptor 1 family. Interacts with CDK5. Interacts with MTOR. Interacts with RPTOR and NF1.

The protein resides in the cell membrane. In terms of biological role, G-protein coupled receptor for 5-hydroxytryptamine (serotonin), a biogenic hormone that functions as a neurotransmitter, a hormone and a mitogen. Also has a high affinity for tricyclic psychotropic drugs. Ligand binding causes a conformation change that triggers signaling via guanine nucleotide-binding proteins (G proteins) and modulates the activity of downstream effectors. HTR6 is coupled to G(s) G alpha proteins and mediates activation of adenylate cyclase activity. Controls pyramidal neurons migration during corticogenesis, through the regulation of CDK5 activity. Is an activator of mTOR signaling. The chain is 5-hydroxytryptamine receptor 6 from Mus musculus (Mouse).